Here is a 240-residue protein sequence, read N- to C-terminus: Nudix hydrolase 3 (240 aa).

The Nudix hydrolase domain maps to 50-190 (NSAMSVLIPL…RMKYTLPSFD (141 aa)). Residues 89 to 110 (GRMDPGETTTETALRETFEEIG) carry the Nudix box motif. Mg(2+) is bound by residues Glu104 and Glu108.

Belongs to the Nudix hydrolase family. PCD1 subfamily. The cofactor is Mn(2+). It depends on Mg(2+) as a cofactor.

Probably mediates the hydrolysis of some nucleoside diphosphate derivatives. This chain is Nudix hydrolase 3 (ndx-3), found in Caenorhabditis elegans.